A 119-amino-acid polypeptide reads, in one-letter code: Large ribosomal subunit protein uL18 (119 aa).

The protein belongs to the universal ribosomal protein uL18 family. In terms of assembly, part of the 50S ribosomal subunit; part of the 5S rRNA/L5/L18/L25 subcomplex. Contacts the 5S and 23S rRNAs.

In terms of biological role, this is one of the proteins that bind and probably mediate the attachment of the 5S RNA into the large ribosomal subunit, where it forms part of the central protuberance. This is Large ribosomal subunit protein uL18 from Clostridium tetani (strain Massachusetts / E88).